A 309-amino-acid polypeptide reads, in one-letter code: HPr kinase/phosphorylase (309 aa).

Residues histidine 144 and lysine 165 contribute to the active site. 159 to 166 is an ATP binding site; sequence GDSGLGKS. Residue serine 166 coordinates Mg(2+). Aspartate 183 functions as the Proton acceptor; for phosphorylation activity. Proton donor; for dephosphorylation activity in the catalytic mechanism. Residues 206–215 are important for the catalytic mechanism of both phosphorylation and dephosphorylation; that stretch reads IEVRGLGLID. Glutamate 207 serves as a coordination point for Mg(2+). Arginine 249 is an active-site residue. The segment at 270-275 is important for the catalytic mechanism of dephosphorylation; that stretch reads PIRQGR.

Belongs to the HPrK/P family. Homohexamer. It depends on Mg(2+) as a cofactor.

It catalyses the reaction [HPr protein]-L-serine + ATP = [HPr protein]-O-phospho-L-serine + ADP + H(+). The catalysed reaction is [HPr protein]-O-phospho-L-serine + phosphate + H(+) = [HPr protein]-L-serine + diphosphate. Catalyzes the ATP- as well as the pyrophosphate-dependent phosphorylation of a specific serine residue in HPr, a phosphocarrier protein of the phosphoenolpyruvate-dependent sugar phosphotransferase system (PTS). HprK/P also catalyzes the pyrophosphate-producing, inorganic phosphate-dependent dephosphorylation (phosphorolysis) of seryl-phosphorylated HPr (P-Ser-HPr). The chain is HPr kinase/phosphorylase (hprK) from Mycoplasmopsis pulmonis (strain UAB CTIP) (Mycoplasma pulmonis).